A 405-amino-acid chain; its full sequence is Protein lin-11 (405 aa).

Glycyl lysine isopeptide (Lys-Gly) (interchain with G-Cter in SUMO) cross-links involve residues Lys-17 and Lys-18. LIM zinc-binding domains are found at residues 68–124 (CAAC…RRYS) and 127–187 (CAGC…TATK). Polar residues predominate over residues 189 to 205 (STPTSIHRPVSNGSECN). 2 disordered regions span residues 189–208 (STPT…NSDV) and 224–246 (GEGD…GPRT). Residues 241–300 (RRGPRTTIKAKQLETLKNAFAATPKPTRHIREQLAAETGLNMRVIQVWFQNRRSKERRMK) constitute a DNA-binding region (homeobox).

As to expression, expressed in ADL, AVJL, AIZL, RICL, RIF and AVG neurons.

It localises to the nucleus. Functionally, probable transcription factor which is required for asymmetric division of vulval blast cells. Involved in olfactory plasticity probably by regulating the expression of transcription factor mbr-1 in RIF neurons. Plays a role in the chemorepulsive response toward ascaroside pheromones mediated by the ADL sensory neurons, probably by regulating E-box motif 5'-CANNTG-3' containing target genes in the ADL neurons. Plays a role in the differentiation of the ADL sensory neurons. The sequence is that of Protein lin-11 (lin-11) from Caenorhabditis elegans.